A 303-amino-acid polypeptide reads, in one-letter code: Recombination-associated protein RdgC (303 aa).

The protein belongs to the RdgC family.

It is found in the cytoplasm. The protein localises to the nucleoid. May be involved in recombination. The chain is Recombination-associated protein RdgC from Enterobacter sp. (strain 638).